Here is a 200-residue protein sequence, read N- to C-terminus: Large ribosomal subunit protein uL4 (200 aa).

The interval 38–72 (GRQGTKQQKTRSDVAGGGKRPWRQKGTGRARAGTT) is disordered.

It belongs to the universal ribosomal protein uL4 family. Part of the 50S ribosomal subunit.

In terms of biological role, one of the primary rRNA binding proteins, this protein initially binds near the 5'-end of the 23S rRNA. It is important during the early stages of 50S assembly. It makes multiple contacts with different domains of the 23S rRNA in the assembled 50S subunit and ribosome. Functionally, forms part of the polypeptide exit tunnel. The chain is Large ribosomal subunit protein uL4 from Pseudomonas entomophila (strain L48).